The chain runs to 53 residues: UPF0391 membrane protein YPDSF_3201 (53 aa).

The next 2 membrane-spanning stretches (helical) occupy residues Trp4–Ala24 and Ala27–Phe47.

The protein belongs to the UPF0391 family.

The protein localises to the cell membrane. In Yersinia pestis (strain Pestoides F), this protein is UPF0391 membrane protein YPDSF_3201.